We begin with the raw amino-acid sequence, 544 residues long: Probable protein kinase UbiB (544 aa).

Residues 123–501 (DFDIKPLASA…KRQQAKGQFL (379 aa)) form the Protein kinase domain. ATP contacts are provided by residues 129 to 137 (LASASIAQV) and Lys152. Asp287 serves as the catalytic Proton acceptor. A helical transmembrane segment spans residues 515–537 (LLTSNITVLASISAATGAAFWLF).

This sequence belongs to the ABC1 family. UbiB subfamily.

It localises to the cell inner membrane. Its pathway is cofactor biosynthesis; ubiquinone biosynthesis [regulation]. In terms of biological role, is probably a protein kinase regulator of UbiI activity which is involved in aerobic coenzyme Q (ubiquinone) biosynthesis. This Aliivibrio fischeri (strain MJ11) (Vibrio fischeri) protein is Probable protein kinase UbiB.